The primary structure comprises 332 residues: Malate dehydrogenase (332 aa).

NAD(+) is bound by residues 16–17, aspartate 43, and glycine 90; that span reads QI. Arginine 99 is an oxaloacetate binding site. NAD(+) contacts are provided by glutamine 113 and asparagine 132. Positions 132, 163, 188, and 243 each coordinate oxaloacetate. Histidine 188 functions as the Proton acceptor in the catalytic mechanism.

This sequence belongs to the LDH/MDH superfamily. MDH type 2 family. Homodimer.

It is found in the cytoplasm. It carries out the reaction (S)-malate + NAD(+) = oxaloacetate + NADH + H(+). Functionally, catalyzes the reduction of the carbonyl group of oxalacetic acid. No activity with pulegone. The polypeptide is Malate dehydrogenase (MD1) (Nicotiana tabacum (Common tobacco)).